Reading from the N-terminus, the 485-residue chain is Glutamyl-tRNA(Gln) amidotransferase subunit A (485 aa).

Active-site charge relay system residues include Lys79 and Ser154. Ser178 acts as the Acyl-ester intermediate in catalysis.

Belongs to the amidase family. GatA subfamily. Heterotrimer of A, B and C subunits.

The enzyme catalyses L-glutamyl-tRNA(Gln) + L-glutamine + ATP + H2O = L-glutaminyl-tRNA(Gln) + L-glutamate + ADP + phosphate + H(+). Allows the formation of correctly charged Gln-tRNA(Gln) through the transamidation of misacylated Glu-tRNA(Gln) in organisms which lack glutaminyl-tRNA synthetase. The reaction takes place in the presence of glutamine and ATP through an activated gamma-phospho-Glu-tRNA(Gln). The sequence is that of Glutamyl-tRNA(Gln) amidotransferase subunit A from Staphylococcus epidermidis (strain ATCC 35984 / DSM 28319 / BCRC 17069 / CCUG 31568 / BM 3577 / RP62A).